The chain runs to 544 residues: Protein anon-37Cs (544 aa).

The protein localises to the cytoplasm. Has a non-vital function. In Drosophila lebanonensis (Fruit fly), this protein is Protein anon-37Cs (anon-37Cs).